The primary structure comprises 304 residues: ATP phosphoribosyltransferase (304 aa).

Belongs to the ATP phosphoribosyltransferase family. Long subfamily. Mg(2+) is required as a cofactor.

Its subcellular location is the cytoplasm. The catalysed reaction is 1-(5-phospho-beta-D-ribosyl)-ATP + diphosphate = 5-phospho-alpha-D-ribose 1-diphosphate + ATP. It functions in the pathway amino-acid biosynthesis; L-histidine biosynthesis; L-histidine from 5-phospho-alpha-D-ribose 1-diphosphate: step 1/9. Feedback inhibited by histidine. Functionally, catalyzes the condensation of ATP and 5-phosphoribose 1-diphosphate to form N'-(5'-phosphoribosyl)-ATP (PR-ATP). Has a crucial role in the pathway because the rate of histidine biosynthesis seems to be controlled primarily by regulation of HisG enzymatic activity. This chain is ATP phosphoribosyltransferase, found in Xanthomonas campestris pv. campestris (strain B100).